The chain runs to 375 residues: Growth/differentiation factor 8 (375 aa).

A signal peptide spans 1 to 18 (MQKLQISVYIYLFMLIVA). Residues 19-266 (GPVDLNENSE…VTDTPKRSRR (248 aa)) constitute a propeptide that is removed on maturation. Asn71 is a glycosylation site (N-linked (GlcNAc...) asparagine). Cystine bridges form between Cys272/Cys282, Cys281/Cys340, Cys309/Cys372, and Cys313/Cys374.

This sequence belongs to the TGF-beta family. In terms of assembly, homodimer; disulfide-linked. Interacts with WFIKKN2, leading to inhibit its activity. Interacts with FSTL3. Synthesized as large precursor molecule that undergoes proteolytic cleavage to generate an N-terminal propeptide and a disulfide linked C-terminal dimer, which is the biologically active molecule. The circulating form consists of a latent complex of the C-terminal dimer and other proteins, including its propeptide, which maintain the C-terminal dimer in a latent, inactive state. Ligand activation requires additional cleavage of the prodomain by a tolloid-like metalloproteinase.

The protein resides in the secreted. Its function is as follows. Acts specifically as a negative regulator of skeletal muscle growth. This Lepus capensis (Brown hare) protein is Growth/differentiation factor 8 (MSTN).